Here is a 598-residue protein sequence, read N- to C-terminus: Aspartate--tRNA(Asp/Asn) ligase (598 aa).

E182 contacts L-aspartate. The aspartate stretch occupies residues 206-209 (QIFK). R228 lines the L-aspartate pocket. ATP contacts are provided by residues 228-230 (RDE) and Q237. Position 456 (H456) interacts with L-aspartate. An ATP-binding site is contributed by E490. R497 is an L-aspartate binding site. An ATP-binding site is contributed by 542 to 545 (GLDR).

The protein belongs to the class-II aminoacyl-tRNA synthetase family. Type 1 subfamily. As to quaternary structure, homodimer.

The protein resides in the cytoplasm. The catalysed reaction is tRNA(Asx) + L-aspartate + ATP = L-aspartyl-tRNA(Asx) + AMP + diphosphate. Functionally, aspartyl-tRNA synthetase with relaxed tRNA specificity since it is able to aspartylate not only its cognate tRNA(Asp) but also tRNA(Asn). Reaction proceeds in two steps: L-aspartate is first activated by ATP to form Asp-AMP and then transferred to the acceptor end of tRNA(Asp/Asn). This chain is Aspartate--tRNA(Asp/Asn) ligase, found in Lachnoclostridium phytofermentans (strain ATCC 700394 / DSM 18823 / ISDg) (Clostridium phytofermentans).